The primary structure comprises 309 residues: Taste receptor type 2 member 45 (309 aa).

A topological domain (extracellular) is located at residue Met1. A helical transmembrane segment spans residues 2 to 22 (ITFLPIIFSILVVVTFVIGNF). The Cytoplasmic segment spans residues 23-55 (ANGFIALVNSTEWVKRQKISFADQIVTALAVSR). A helical transmembrane segment spans residues 56 to 76 (VGLLWVLLLNWYSTVLNPAFY). Residues 77–98 (SVELRTTAYNIWAVTGHFSNWL) lie on the Extracellular side of the membrane. Residues 99–119 (ATSLSIFYLLKIANFSNLIFL) traverse the membrane as a helical segment. Topologically, residues 120–126 (HLKRRVK) are cytoplasmic. The chain crosses the membrane as a helical span at residues 127–147 (SVILVMLLGPLLFLACHLFVV). Over 148–178 (NMNQIVWTKEYEGNMTWKIKLRRAMYLSDTT) the chain is Extracellular. Asn161 carries N-linked (GlcNAc...) asparagine glycosylation. A helical transmembrane segment spans residues 179 to 199 (VTMLANLVPFTVTLISFLLLV). Over 200 to 229 (CSLCEHLKKMQLHGKGSQDPSTKVHIKALQ) the chain is Cytoplasmic. The helical transmembrane segment at 230-250 (TVISFLLLCAIYFVSVIISVW) threads the bilayer. Residues 251–259 (SFKNLENKP) lie on the Extracellular side of the membrane. Residues 260 to 280 (VFMFCQAIGFSCSSAHPFILI) traverse the membrane as a helical segment. Residues 281–309 (WGNKKLKQPFLSVLWQMRYWVKGEKPSSS) are Cytoplasmic-facing.

This sequence belongs to the G-protein coupled receptor T2R family.

It localises to the membrane. Receptor that may play a role in the perception of bitterness and is gustducin-linked. May play a role in sensing the chemical composition of the gastrointestinal content. The activity of this receptor may stimulate alpha gustducin, mediate PLC-beta-2 activation and lead to the gating of TRPM5. The sequence is that of Taste receptor type 2 member 45 (TAS2R45) from Pan paniscus (Pygmy chimpanzee).